Here is a 760-residue protein sequence, read N- to C-terminus: DNA-directed RNA polymerase subunit beta' (760 aa).

Residues Cys76, Cys78, Cys90, and Cys93 each coordinate Zn(2+). Residues Asp594, Asp596, and Asp598 each contribute to the Mg(2+) site.

The protein belongs to the RNA polymerase beta' chain family. RpoC1 subfamily. In plastids the minimal PEP RNA polymerase catalytic core is composed of four subunits: alpha, beta, beta', and beta''. When a (nuclear-encoded) sigma factor is associated with the core the holoenzyme is formed, which can initiate transcription. Mg(2+) serves as cofactor. The cofactor is Zn(2+).

It is found in the plastid. The protein localises to the chloroplast. The enzyme catalyses RNA(n) + a ribonucleoside 5'-triphosphate = RNA(n+1) + diphosphate. In terms of biological role, DNA-dependent RNA polymerase catalyzes the transcription of DNA into RNA using the four ribonucleoside triphosphates as substrates. This chain is DNA-directed RNA polymerase subunit beta', found in Bigelowiella natans (Pedinomonas minutissima).